A 180-amino-acid chain; its full sequence is ATP synthase subunit delta (180 aa).

The protein belongs to the ATPase delta chain family. In terms of assembly, F-type ATPases have 2 components, F(1) - the catalytic core - and F(0) - the membrane proton channel. F(1) has five subunits: alpha(3), beta(3), gamma(1), delta(1), epsilon(1). F(0) has three main subunits: a(1), b(2) and c(10-14). The alpha and beta chains form an alternating ring which encloses part of the gamma chain. F(1) is attached to F(0) by a central stalk formed by the gamma and epsilon chains, while a peripheral stalk is formed by the delta and b chains.

It is found in the cell membrane. F(1)F(0) ATP synthase produces ATP from ADP in the presence of a proton or sodium gradient. F-type ATPases consist of two structural domains, F(1) containing the extramembraneous catalytic core and F(0) containing the membrane proton channel, linked together by a central stalk and a peripheral stalk. During catalysis, ATP synthesis in the catalytic domain of F(1) is coupled via a rotary mechanism of the central stalk subunits to proton translocation. Its function is as follows. This protein is part of the stalk that links CF(0) to CF(1). It either transmits conformational changes from CF(0) to CF(1) or is implicated in proton conduction. The polypeptide is ATP synthase subunit delta (Pediococcus pentosaceus (strain ATCC 25745 / CCUG 21536 / LMG 10740 / 183-1w)).